The following is a 418-amino-acid chain: MRFAWTALLGSLQLCALVRCAPPAASHRQPPREQAAAPGAWRQKIQWENNGQVFSLLSLGSQYQPQRRRDPGATAPGAANATAPQMRTPILLLRNNRTAAARVRTAGPSAAAAGRPRPAARHWFQAGYSTSGAHDAGTSRADNQTAPGEVPTLSNLRPPNRVEVDGMVGDDPYNPYKYTDDNPYYNYYDTYERPRPGSRYRPGYGTGYFQYGLPDLVPDPYYIQASTYVQKMAMYNLRCAAEENCLASSAYRXDVRDYDHRVLLRFPQRVKNQGTSDFLPSRPRYSWEWHSCHQHYHSMDEFSHYDLLDASTQRRVAEGHKASFCLEDTSCDYGYHRRFACTAHTQGLSPGCYDTYNADIDCQWIDITDVKPGNYILKVSVNPSYLVPESDYSNNVVRCEIRYTGHHAYASGCTISPY.

The signal sequence occupies residues 1-20 (MRFAWTALLGSLQLCALVRC). Positions 21 to 169 (APPAASHRQP…NRVEVDGMVG (149 aa)) are cleaved as a propeptide — removed by BMP1. A disordered region spans residues 63–84 (YQPQRRRDPGATAPGAANATAP). The segment covering 72–84 (GATAPGAANATAP) has biased composition (low complexity). N-linked (GlcNAc...) asparagine glycosylation is found at Asn-80, Asn-96, and Asn-143. The tract at residues 130 to 175 (TSGAHDAGTSRADNQTAPGEVPTLSNLRPPNRVEVDGMVGDDPYNP) is disordered. Over residues 140–157 (RADNQTAPGEVPTLSNLR) the composition is skewed to polar residues. The residue at position 188 (Tyr-188) is a Sulfotyrosine. A lysyl-oxidase like region spans residues 214–418 (PDLVPDPYYI…YASGCTISPY (205 aa)). Intrachain disulfides connect Cys-239–Cys-245, Cys-292–Cys-341, Cys-325–Cys-331, Cys-352–Cys-362, and Cys-399–Cys-413. Residues His-293, His-295, and His-297 each coordinate Cu cation. The segment at residues 321–356 (KASFCLEDTSCDYGYHRRFACTAHTQGLSPGCYDTY) is a cross-link (lysine tyrosylquinone (Lys-Tyr)). Tyr-356 carries the post-translational modification 2',4',5'-topaquinone.

This sequence belongs to the lysyl oxidase family. In terms of assembly, interacts with MFAP4. Interacts (via propeptide) with EFEMP2; this interaction is strong and facilitates formation of ternary complexes with ELN during elastic fiber assembly; this interaction limits interaction of EFEMP2 with FBLN5. It depends on Cu cation as a cofactor. Lysine tyrosylquinone residue serves as cofactor. The lysine tyrosylquinone cross-link (LTQ) is generated by condensation of the epsilon-amino group of a lysine with a topaquinone produced by oxidation of tyrosine. Post-translationally, proteolytically cleaved by BMP1 which removes the propeptide. Also proteolytically cleaved by ADAMTS2 and ADAMTS14, but not by ADAMTS3, at an additional cleavage site downstream of the BMP1 cleavage site. The propeptide plays a role in directing the deposition of this enzyme to elastic fibers, via interaction with tropoelastin. Cleavage by BMP1 to remove the propeptide does not increase enzymatic activity but increases binding to collagen. Cleavage by ADAMTS2 produces a form with reduced collagen-binding activity. In terms of processing, sulfated at Tyr-188 and also at either Tyr-184 or Tyr-185 which enhances binding to collagen.

It is found in the secreted. Its subcellular location is the extracellular space. The catalysed reaction is L-lysyl-[protein] + O2 + H2O = (S)-2-amino-6-oxohexanoyl-[protein] + H2O2 + NH4(+). Its function is as follows. Responsible for the post-translational oxidative deamination of peptidyl lysine residues in precursors to fibrous collagen and elastin. Regulator of Ras expression. May play a role in tumor suppression. Plays a role in the aortic wall architecture. This chain is Protein-lysine 6-oxidase, found in Bos taurus (Bovine).